The primary structure comprises 1132 residues: Myosin-binding protein C, fast-type (1132 aa).

Residues 1–59 (MPEPSKAAPKKEAKKKEEKKEEKKEAPPPQEHKDEAPDDVHPPETPDPEGLFLSKPQNV) are disordered. The segment covering 9 to 44 (PKKEAKKKEEKKEEKKEAPPPQEHKDEAPDDVHPPE) has biased composition (basic and acidic residues). 5 consecutive Ig-like C2-type domains span residues 48-149 (PEGL…SIDV), 249-338 (SEAF…VKEP), 339-429 (PVTV…VEEK), 430-530 (QLEV…KQEP), and 531-630 (PKIH…VVDV). Fibronectin type-III domains follow at residues 633-729 (PPQS…IAPT) and 731-826 (EPTH…IREI). Positions 830–923 (PKIRLPRHLR…ATLRLRVVER (94 aa)) constitute an Ig-like C2-type 6 domain. The 97-residue stretch at 926 to 1022 (PPQAVRVMEV…HNTARIAKEG (97 aa)) folds into the Fibronectin type-III 3 domain. The Ig-like C2-type 7 domain maps to 1039–1132 (PQFLTPLVDR…ECRLDVRVPQ (94 aa)).

It belongs to the immunoglobulin superfamily. MyBP family.

Functionally, thick filament-associated protein located in the crossbridge region of vertebrate striated muscle a bands. In vitro it binds MHC, F-actin and native thin filaments, and modifies the activity of actin-activated myosin ATPase. It may modulate muscle contraction or may play a more structural role. This chain is Myosin-binding protein C, fast-type (MYBPC2), found in Gallus gallus (Chicken).